The sequence spans 110 residues: MKTALVLFFMLIPVWASSCQLHKPWNFLDCYTKETNYIGWVYGIMSGLVFVSSVVSLQLYARLNFSWNKYTDDLPEYPNPQDDLPLNIVFPEPPRPPSVVSYFKFTGEDD.

Residues 1-16 (MKTALVLFFMLIPVWA) form the signal peptide. A helical transmembrane segment spans residues 37–57 (YIGWVYGIMSGLVFVSSVVSL).

It belongs to the adenoviridae E3_14 family. Phosphorylated on serine; O-glycosylated, but not N-glycosylated.

It is found in the host membrane. Its function is as follows. Down-regulates the EGF receptor and prevents cytolysis by TNF. The chain is Early E3B 12.7 kDa protein from Homo sapiens (Human).